The sequence spans 323 residues: E3 ubiquitin-protein ligase makorin (323 aa).

C3H1-type zinc fingers lie at residues 1-28 and 29-56; these read MSDR…HDSK and DPPN…HVRA. A compositionally biased stretch (low complexity) spans 62–74; sequence LSSDSESLDRSIS. Residues 62–92 form a disordered region; that stretch reads LSSDSESLDRSISTTPSRHLQQQGDNNDGDK. Residues 75 to 87 show a composition bias toward polar residues; the sequence is TTPSRHLQQQGDN. A C3H1-type 3 zinc finger spans residues 101 to 128; sequence PREYPICSFAAAGDCPRGNQCPHMHGDL. The segment at 129-158 is makorin-type Cys-His; sequence CNTCGKKCLHPFRPEEREEHTKECEKKQKH. The RING-type zinc finger occupies 170-228; sequence CSVCLDRILSKATPGERKFGLLTECDHPFCIQCIRNWRSSAPVSGMDVNSTLRACPICR. A C3H1-type 4 zinc finger spans residues 257–286; the sequence is KLRSIDCKHFNFGNGNCPFGASCFYKHAYS.

The catalysed reaction is S-ubiquitinyl-[E2 ubiquitin-conjugating enzyme]-L-cysteine + [acceptor protein]-L-lysine = [E2 ubiquitin-conjugating enzyme]-L-cysteine + N(6)-ubiquitinyl-[acceptor protein]-L-lysine.. The protein operates within protein modification; protein ubiquitination. Functionally, E3 ubiquitin ligase catalyzing the covalent attachment of ubiquitin moieties onto substrate proteins. The sequence is that of E3 ubiquitin-protein ligase makorin (MKRN) from Arabidopsis thaliana (Mouse-ear cress).